We begin with the raw amino-acid sequence, 478 residues long: MNRDSFYPAIACFPLLLMLAGCAPMHETRQALSQQTPAAQVDTALPTALKNGWPDSQWWLEYHDNQLTSLINNALQNAPDMQVAEQRIQLAEAQAKAVATQDGPQIDFSADMERQKMSAEGLMGPFALNDPAAGTTGPWYTNGTFGLTAGWHLDIWGKNRAEVTARLGTVKARAAEREQTRQLLAGSVARLYWEWQTQAALNTVLQQIEKEQNTIIATDRQLYQNGITSSVEGVETDINASKTRQQLNDVAGKMKIIEARLIALTNHQTKSLTLKPVALPKVASQLPDELGYSLLARRADLQAAHWYVESSLSTIDAAKAAFYPDINLMAFLQQDALHLSDLFRHSAQQMGVTAGLTLPIFDSGRLNANLDIAKAESNLSIASYNKAVVEAVNDVARAASQVQTLAEKNQHQAQIERDALRVVGLAQARFNAGIIAGSRVSEARIPALRERANGLLLQGQWLDASIQLTGALGGGYKR.

A signal peptide spans 1 to 21 (MNRDSFYPAIACFPLLLMLAG). The N-palmitoyl cysteine moiety is linked to residue C22. C22 is lipidated: S-diacylglycerol cysteine.

This sequence belongs to the outer membrane factor (OMF) (TC 1.B.17) family.

Its subcellular location is the cell outer membrane. Functionally, could be involved in resistance to puromycin, acriflavine and tetraphenylarsonium chloride. This chain is Multidrug resistance outer membrane protein MdtQ (mdtQ), found in Escherichia coli O157:H7.